The sequence spans 218 residues: Small ribosomal subunit protein uS3c (218 aa).

The region spanning 47-118 is the KH type-2 domain; it reads VQKHMRISSG…RLNIAIARVP (72 aa).

It belongs to the universal ribosomal protein uS3 family. Part of the 30S ribosomal subunit.

The protein localises to the plastid. It is found in the chloroplast. In Nuphar advena (Common spatterdock), this protein is Small ribosomal subunit protein uS3c (rps3).